The chain runs to 293 residues: Ethanolamine ammonia-lyase small subunit (293 aa).

Residues valine 207 and glutamate 228 each coordinate adenosylcob(III)alamin.

It belongs to the EutC family. As to quaternary structure, the basic unit is a heterodimer which dimerizes to form tetramers. The heterotetramers trimerize; 6 large subunits form a core ring with 6 small subunits projecting outwards. It depends on adenosylcob(III)alamin as a cofactor.

The protein resides in the bacterial microcompartment. The catalysed reaction is ethanolamine = acetaldehyde + NH4(+). Its pathway is amine and polyamine degradation; ethanolamine degradation. In terms of biological role, catalyzes the deamination of various vicinal amino-alcohols to oxo compounds. Allows this organism to utilize ethanolamine as the sole source of nitrogen and carbon in the presence of external vitamin B12. The chain is Ethanolamine ammonia-lyase small subunit from Listeria monocytogenes serotype 4a (strain HCC23).